The chain runs to 902 residues: HTH-type transcriptional regulator MalT (902 aa).

39–46 (SPAGYGKT) contacts ATP. An HTH luxR-type domain is found at 832 to 897 (ELVRTSPLTQ…EAIVTAENLL (66 aa)). The segment at residues 856-875 (NEQIAQELDVAGTTIKTHIR) is a DNA-binding region (H-T-H motif).

Belongs to the MalT family. In terms of assembly, monomer in solution. Oligomerizes to an active state in the presence of the positive effectors ATP and maltotriose.

Its activity is regulated as follows. Activated by ATP and maltotriose, which are both required for DNA binding. Its function is as follows. Positively regulates the transcription of the maltose regulon whose gene products are responsible for uptake and catabolism of malto-oligosaccharides. Specifically binds to the promoter region of its target genes, recognizing a short DNA motif called the MalT box. The chain is HTH-type transcriptional regulator MalT from Vibrio campbellii (strain ATCC BAA-1116).